We begin with the raw amino-acid sequence, 541 residues long: Tyrosine-protein kinase Yes (541 aa).

Over residues 1 to 10 (MGCIKSKENK) the composition is skewed to basic and acidic residues. The segment at 1-29 (MGCIKSKENKSPAIKYTPENPTEPVNTSA) is disordered. Gly2 carries the N-myristoyl glycine lipid modification. The S-palmitoyl cysteine; in membrane form moiety is linked to residue Cys3. Polar residues predominate over residues 19 to 29 (ENPTEPVNTSA). Tyr32 carries the post-translational modification Phosphotyrosine. Positions 89–150 (GGVTIFVALY…PSNYVAPADS (62 aa)) constitute an SH3 domain. An SH2 domain is found at 156-253 (WYFGKMGRKD…GLCHKLTTVC (98 aa)). The Protein kinase domain occupies 275 to 528 (LRLEVKLGQG…YIQSFLEDYF (254 aa)). ATP is bound by residues 281-289 (LGQGCFGEV) and Lys303. Phosphotyrosine occurs at positions 334 and 343. Residue Asp394 is the Proton acceptor of the active site. At Tyr424 the chain carries Phosphotyrosine; by autocatalysis. The residue at position 535 (Tyr535) is a Phosphotyrosine.

As to quaternary structure, interacts with YAP1 and CSF1R. Interacts with FASLG. Interacts with CTNND1; this interaction allows YES1-mediated activation of FYN and FER and subsequent phosphorylation of CTNND1. Interacts with IL6ST/gp130. Interacts with SCRIB, when YES1 is in a closed conformation; the interaction facilitates YES1 autophosphorylation. In terms of processing, phosphorylated. Phosphorylation by CSK on the C-terminal tail maintains the enzyme in an inactive state. Autophosphorylation at Tyr-424 maintains enzyme activity by blocking CSK-mediated inhibition. Post-translationally, palmitoylation at Cys-3 promotes membrane localization.

Its subcellular location is the cell membrane. It localises to the cytoplasm. The protein resides in the cytoskeleton. The protein localises to the microtubule organizing center. It is found in the centrosome. Its subcellular location is the cytosol. It localises to the cell junction. The enzyme catalyses L-tyrosyl-[protein] + ATP = O-phospho-L-tyrosyl-[protein] + ADP + H(+). Its function is as follows. Non-receptor protein tyrosine kinase that is involved in the regulation of cell growth and survival, apoptosis, cell-cell adhesion, cytoskeleton remodeling, and differentiation. Stimulation by receptor tyrosine kinases (RTKs) including EGFR, PDGFR, CSF1R and FGFR leads to recruitment of YES1 to the phosphorylated receptor, and activation and phosphorylation of downstream substrates. Upon EGFR activation, promotes the phosphorylation of PARD3 to favor epithelial tight junction assembly. Participates in the phosphorylation of specific junctional components such as CTNND1 by stimulating the FYN and FER tyrosine kinases at cell-cell contacts. Upon T-cell stimulation by CXCL12, phosphorylates collapsin response mediator protein 2/DPYSL2 and induces T-cell migration. Participates in CD95L/FASLG signaling pathway and mediates AKT-mediated cell migration. Plays a role in cell cycle progression by phosphorylating the cyclin dependent kinase 4/CDK4 thus regulating the G1 phase. Also involved in G2/M progression and cytokinesis. Catalyzes phosphorylation of organic cation transporter OCT2 which induces its transport activity. The polypeptide is Tyrosine-protein kinase Yes (Yes1) (Rattus norvegicus (Rat)).